Consider the following 288-residue polypeptide: B3 domain-containing protein At2g35310 (288 aa).

2 consecutive DNA-binding regions (TF-B3) follow at residues 19 to 114 and 196 to 288; these read FFKV…FMQD and AEFS…VSKP.

The protein resides in the nucleus. The sequence is that of B3 domain-containing protein At2g35310 from Arabidopsis thaliana (Mouse-ear cress).